The following is a 246-amino-acid chain: DNA repair protein RecO (246 aa).

The protein belongs to the RecO family.

In terms of biological role, involved in DNA repair and RecF pathway recombination. This is DNA repair protein RecO from Methylorubrum populi (strain ATCC BAA-705 / NCIMB 13946 / BJ001) (Methylobacterium populi).